A 441-amino-acid chain; its full sequence is Histidinol dehydrogenase homolog (441 aa).

Histidine 266 contacts Zn(2+). Active-site proton acceptor residues include glutamate 334 and histidine 335. Residue histidine 427 participates in Zn(2+) binding.

Belongs to the histidinol dehydrogenase family. The cofactor is Zn(2+).

This chain is Histidinol dehydrogenase homolog, found in Cereibacter sphaeroides (strain ATCC 17023 / DSM 158 / JCM 6121 / CCUG 31486 / LMG 2827 / NBRC 12203 / NCIMB 8253 / ATH 2.4.1.) (Rhodobacter sphaeroides).